Consider the following 23-residue polypeptide: Basic phospholipase A2 CTs-G6 (23 aa).

Requires Ca(2+) as cofactor. In terms of processing, contains 7 disulfide bonds. As to expression, expressed by the venom gland.

It is found in the secreted. The enzyme catalyses a 1,2-diacyl-sn-glycero-3-phosphocholine + H2O = a 1-acyl-sn-glycero-3-phosphocholine + a fatty acid + H(+). Its function is as follows. Snake venom phospholipase A2 (PLA2) that induces local edema a few hours after injection (5-10 ug) in the hind paw. PLA2 catalyzes the calcium-dependent hydrolysis of the 2-acyl groups in 3-sn-phosphoglycerides. The polypeptide is Basic phospholipase A2 CTs-G6 (Trimeresurus stejnegeri (Chinese green tree viper)).